Here is a 222-residue protein sequence, read N- to C-terminus: Ribonuclease T (222 aa).

The 175-residue stretch at 20-194 folds into the Exonuclease domain; the sequence is VVIDVETAGF…YDTERTAELF (175 aa). The Mg(2+) site is built by D23, E25, H181, and D186. Residue H181 is the Proton donor/acceptor of the active site.

Belongs to the RNase T family. As to quaternary structure, homodimer. Mg(2+) is required as a cofactor.

In terms of biological role, trims short 3' overhangs of a variety of RNA species, leaving a one or two nucleotide 3' overhang. Responsible for the end-turnover of tRNA: specifically removes the terminal AMP residue from uncharged tRNA (tRNA-C-C-A). Also appears to be involved in tRNA biosynthesis. The sequence is that of Ribonuclease T from Shewanella oneidensis (strain ATCC 700550 / JCM 31522 / CIP 106686 / LMG 19005 / NCIMB 14063 / MR-1).